We begin with the raw amino-acid sequence, 355 residues long: Glucose-1-phosphate thymidylyltransferase (355 aa).

Mg(2+)-binding residues include Asp-107 and Asp-220.

It belongs to the glucose-1-phosphate thymidylyltransferase family. It depends on Mg(2+) as a cofactor.

It carries out the reaction dTTP + alpha-D-glucose 1-phosphate + H(+) = dTDP-alpha-D-glucose + diphosphate. It participates in antibiotic biosynthesis; streptomycin biosynthesis. In terms of biological role, involved in the biosynthesis of the streptose moiety of streptomycin. Catalyzes the formation of dTDP-glucose, from dTTP and glucose 1-phosphate, as well as its pyrophosphorolysis. The chain is Glucose-1-phosphate thymidylyltransferase (strD) from Streptomyces griseus.